A 687-amino-acid polypeptide reads, in one-letter code: Phenylalanine aminomutase (L-beta-phenylalanine forming) (687 aa).

Catalysis depends on Tyr-80, which acts as the Proton donor/acceptor. A cross-link (5-imidazolinone (Ala-Gly)) is located at residues 175–177; sequence ASG. Residue Ser-176 is modified to 2,3-didehydroalanine (Ser). Residues Asn-231, Gln-319, Arg-325, Asn-355, Lys-427, Glu-455, and Asn-458 each coordinate (E)-cinnamate.

Belongs to the PAL/histidase family. Homodimer. Homotetramer, dimer of dimers. Post-translationally, contains an active site 4-methylidene-imidazol-5-one (MIO), which is formed autocatalytically by cyclization and dehydration of residues Ala-Ser-Gly.

The protein resides in the cytoplasm. The enzyme catalyses L-phenylalanine = L-beta-phenylalanine. It catalyses the reaction L-phenylalanine = (E)-cinnamate + NH4(+). The protein operates within alkaloid biosynthesis; taxol biosynthesis. It participates in phenylpropanoid metabolism; trans-cinnamate biosynthesis; trans-cinnamate from L-phenylalanine: step 1/1. Its function is as follows. Phenylalanine aminomutase that catalyzes the rearrangement of L-phenylalanine to R-beta-phenylalanine. Catalyzes the first committed step in the biosynthesis of the side chain of the alkaloid taxol (paclitaxel), a widely-used compound with antitumor activity. Also has low phenylalanine ammonia-lyase activity and can catalyze the amination of trans-cinnamate. The chain is Phenylalanine aminomutase (L-beta-phenylalanine forming) (pam) from Taxus chinensis (Chinese yew).